A 146-amino-acid polypeptide reads, in one-letter code: VHWTSEEKQYITSLWAKVNVGEVGGEALARLLIVYPWTQRFFASFGNLSSANAILHNAKVLAHGQKVLTSFGEAVKNLDNIKKTFAQLSELHCEKLHVDPENFKLLGNILIIVLATHFPKEFTPASQAAWTKLVNAVAHALALGYH.

Positions 2–146 (HWTSEEKQYI…VAHALALGYH (145 aa)) constitute a Globin domain. Positions 63 and 92 each coordinate heme b.

Belongs to the globin family. As to quaternary structure, hemoglobins A and D are heterotetramers of alpha-1, alpha-2 and two identical beta chains. As to expression, red blood cells.

Functionally, involved in oxygen transport from the lung to the various peripheral tissues. In Aldabrachelys gigantea (Aldabra giant tortoise), this protein is Hemoglobin A/D subunit beta.